Reading from the N-terminus, the 873-residue chain is MTAQPPLHHRHHPYTLFGTSCHLSWYGLLEASVPIVQCLFLDLGGGRAEPRLHTFVVRGDRLPPAEVRAVHRASYAALASAVTTDADERRRGLEQRSAVLARVLLEGSALIRVLARTFTPVQIQTDASGVEILEAAPALGVETAALSNALSLFHVAKLVVIGSYPEVHEPRVVTHTAERVSEEYGTHAHKKLRRGYYAYDLAMSFRVGTHKYVLERDDEAVLARLFEVREVCFLRTCLRLVTPVGFVAVAVTDEQCCLLLQSAWTHLYDVLFRGFAGQPPLRDYLGPDLFETGAARSFFFPGFPPVPVYAVHGLHTLMRETALDAAAEVLSWCGLPDIVGSAGKLEVEPCALSLGVPEDEWQVFGTEAGGGAVRLNATAFRERPAGGDRRWLLPPLPRDDGDGENNVVEVSSSTGGAHPPSDDATFTVHVRDATLHRVLIVDLVERVLAKCVRARDFNPYVRYSHRLHTYAVCEKFIENLRFRSRRAFWQIQSLLGYISEHVTSACASAGLLWVLSRGHREFYVYDGYSGHGPVSAEVCVRTVVDCYWRKLFGGDDPGPTCRVQESAPGVLLVWGDERLVGPFNFFYGNGGAGGSPLHGVVGGFAAGHCGGACCAGCVVTHRHSSGGGGSGVGDADHASGGGLDAAAGSGHNGGSDRVSPSTPPAALGGCCCAAGGDWLSAVGHVLGRLPALLRERVSVSELEAVYREILFRFVARRNDVDFWLLRFQPGENEVRPHAGVIDCAPFHGVWAEQGQIIVQSRDTALAADIGYGVYVDKAFAMLTACVEVWARELLSSSTASTTACSSSSVLSSALPSVTSSSSGTATVSPPSCSSSSATWLEERDEWVRSLAVDAQHAAKRVASEGLRFFRLNA.

Positions 394–422 are disordered; sequence PPLPRDDGDGENNVVEVSSSTGGAHPPSD.

The protein belongs to the herpesviridae HEPA family. As to quaternary structure, associates with the primase and the helicase to form the helicase-primase complex. Interacts with the origin-binding protein. Interacts with the polymerase catalytic subunit.

Its subcellular location is the host nucleus. Component of the helicase/primase complex. Unwinds the DNA at the replication forks and generates single-stranded DNA for both leading and lagging strand synthesis. The primase synthesizes short RNA primers on the lagging strand that the polymerase presumably elongates using dNTPs. The primase-associated factor has no known catalytic activity in the complex and may serve to facilitate the formation of the replisome by directly interacting with the origin-binding protein and the polymerase. This Homo sapiens (Human) protein is DNA helicase/primase complex-associated protein (UL102).